The sequence spans 393 residues: Acyltransferase ato1 (393 aa).

The protein belongs to the lysine N-acyltransferase mbtK family.

It participates in siderophore biosynthesis; ferrichrome biosynthesis. In terms of biological role, L-ornithine N(5)-monooxygenase; part of the siderophore biosynthetic pathway. Omphalotus olearius produces ferrichrome A, but no other siderophore has been detected. Ferrichrome A consists of a hexapeptide ring made up of one glycine, two serine, and three N(5)-hydroxyornithine amino acid residues, the latter acylated by trans-(alpha-methyl)-glutaconic acid residues. The biosynthesis of ferrichrome A depends on the hydroxylation of ornithine to N(5)-hydroxyornithine, catalyzed by the monooxygenase omo1. The second step, the acylation of N(5)-hydroxy-L-ornithine is probably catalyzed by the N-acyltransferase ato1. Finally, assembly of ferrichrome A is catalyzed by the nonribosomal peptide synthase (NRPS) fso1. This Omphalotus olearius (Jack o'lantern) protein is Acyltransferase ato1.